The following is a 460-amino-acid chain: Cysteine--tRNA ligase (460 aa).

Residue C28 participates in Zn(2+) binding. Positions 30–40 (MTVYDYCHLGH) match the 'HIGH' region motif. Residues C209, H234, and E238 each contribute to the Zn(2+) site. The 'KMSKS' region signature appears at 266–270 (KMSKS). An ATP-binding site is contributed by K269.

It belongs to the class-I aminoacyl-tRNA synthetase family. In terms of assembly, monomer. Zn(2+) serves as cofactor.

It localises to the cytoplasm. The enzyme catalyses tRNA(Cys) + L-cysteine + ATP = L-cysteinyl-tRNA(Cys) + AMP + diphosphate. In Pseudomonas aeruginosa (strain LESB58), this protein is Cysteine--tRNA ligase.